The sequence spans 1178 residues: DNA-directed RNA polymerase subunit beta' (1178 aa).

Residues cysteine 60, cysteine 62, cysteine 75, and cysteine 78 each coordinate Zn(2+). Positions 450, 452, and 454 each coordinate Mg(2+). Zn(2+) contacts are provided by cysteine 795, cysteine 869, cysteine 876, and cysteine 879.

The protein belongs to the RNA polymerase beta' chain family. The RNAP catalytic core consists of 2 alpha, 1 beta, 1 beta' and 1 omega subunit. When a sigma factor is associated with the core the holoenzyme is formed, which can initiate transcription. Requires Mg(2+) as cofactor. Zn(2+) serves as cofactor.

The catalysed reaction is RNA(n) + a ribonucleoside 5'-triphosphate = RNA(n+1) + diphosphate. DNA-dependent RNA polymerase catalyzes the transcription of DNA into RNA using the four ribonucleoside triphosphates as substrates. The protein is DNA-directed RNA polymerase subunit beta' of Clostridium beijerinckii (strain ATCC 51743 / NCIMB 8052) (Clostridium acetobutylicum).